Reading from the N-terminus, the 448-residue chain is Trk system potassium uptake protein TrkA homolog 1 (448 aa).

In terms of domain architecture, RCK N-terminal 1 spans 1–124 (MKAVIIGAGE…RAQVGVDLMI (124 aa)). Residues 7 to 11 (GAGEV), Asp-29, 70 to 71 (TG), and Arg-101 contribute to the NAD(+) site. In terms of domain architecture, RCK C-terminal 1 spans 144-225 (IDAEMFAEGK…MEDLESVFGS (82 aa)). Positions 230–348 (RTRILLIGCG…FEMVGIDMAV (119 aa)) constitute an RCK N-terminal 2 domain. An NAD(+)-binding site is contributed by 232–262 (RILLIGCGIVGMYLAKLIDKEENADLRIIEH). Positions 368–448 (QTLTTIEGER…AASEVEKYFK (81 aa)) constitute an RCK C-terminal 2 domain.

Part of a potassium transport system. This is Trk system potassium uptake protein TrkA homolog 1 (trkA1) from Methanosarcina mazei (strain ATCC BAA-159 / DSM 3647 / Goe1 / Go1 / JCM 11833 / OCM 88) (Methanosarcina frisia).